We begin with the raw amino-acid sequence, 629 residues long: tRNA uridine 5-carboxymethylaminomethyl modification enzyme MnmG (629 aa).

Residues 13–18 (GGGHAG), Val-125, and Ser-180 each bind FAD. 273–287 (GPRYCPSIEDKVMRF) is an NAD(+) binding site. Gln-370 serves as a coordination point for FAD.

It belongs to the MnmG family. As to quaternary structure, homodimer. Heterotetramer of two MnmE and two MnmG subunits. The cofactor is FAD.

It is found in the cytoplasm. Functionally, NAD-binding protein involved in the addition of a carboxymethylaminomethyl (cmnm) group at the wobble position (U34) of certain tRNAs, forming tRNA-cmnm(5)s(2)U34. This Escherichia coli O157:H7 protein is tRNA uridine 5-carboxymethylaminomethyl modification enzyme MnmG.